The chain runs to 155 residues: Small ribosomal subunit protein uS7 (155 aa).

This sequence belongs to the universal ribosomal protein uS7 family. Part of the 30S ribosomal subunit. Contacts proteins S9 and S11.

In terms of biological role, one of the primary rRNA binding proteins, it binds directly to 16S rRNA where it nucleates assembly of the head domain of the 30S subunit. Is located at the subunit interface close to the decoding center, probably blocks exit of the E-site tRNA. This is Small ribosomal subunit protein uS7 from Kosmotoga olearia (strain ATCC BAA-1733 / DSM 21960 / TBF 19.5.1).